A 407-amino-acid chain; its full sequence is Tryptophan synthase beta chain (407 aa).

Lysine 98 carries the N6-(pyridoxal phosphate)lysine modification.

It belongs to the TrpB family. Tetramer of two alpha and two beta chains. Pyridoxal 5'-phosphate serves as cofactor.

The enzyme catalyses (1S,2R)-1-C-(indol-3-yl)glycerol 3-phosphate + L-serine = D-glyceraldehyde 3-phosphate + L-tryptophan + H2O. The protein operates within amino-acid biosynthesis; L-tryptophan biosynthesis; L-tryptophan from chorismate: step 5/5. In terms of biological role, the beta subunit is responsible for the synthesis of L-tryptophan from indole and L-serine. This is Tryptophan synthase beta chain from Bradyrhizobium sp. (strain ORS 278).